The chain runs to 120 residues: Chaperonin GroEL (120 aa).

23–27 lines the ATP pocket; sequence DGTTT.

Belongs to the chaperonin (HSP60) family. In terms of assembly, forms a cylinder of 14 subunits composed of two heptameric rings stacked back-to-back. Interacts with the co-chaperonin GroES.

The protein resides in the cytoplasm. The enzyme catalyses ATP + H2O + a folded polypeptide = ADP + phosphate + an unfolded polypeptide.. Functionally, together with its co-chaperonin GroES, plays an essential role in assisting protein folding. The GroEL-GroES system forms a nano-cage that allows encapsulation of the non-native substrate proteins and provides a physical environment optimized to promote and accelerate protein folding. This Mycobacterium gordonae protein is Chaperonin GroEL.